A 484-amino-acid chain; its full sequence is Dual specificity protein kinase CLK1 (484 aa).

Residues 1 to 42 (MRHSKRTYCPDWDDKDWDYGKWRSSSSHKRRKRSHSSAQENK) are disordered. Basic residues predominate over residues 26-35 (SSHKRRKRSH). Ser-61 is subject to Phosphoserine. The segment at 79–146 (DYTQGCEPGH…RTRSVEDDEE (68 aa)) is disordered. The span at 86–97 (PGHRQRDHESRY) shows a compositional bias: basic and acidic residues. A compositionally biased stretch (low complexity) spans 100-112 (HSSKSSGRSGRSS). Residues 113 to 138 (YKSKHRIHHSTSHRRSHGKSHRRKRT) show a composition bias toward basic residues. Thr-138 carries the phosphothreonine modification. Position 140 is a phosphoserine (Ser-140). Residues 161-477 (YEIVDTLGEG…LREALKHPFF (317 aa)) form the Protein kinase domain. Residues 167 to 175 (LGEGAFGKV) and Lys-191 contribute to the ATP site. The Proton acceptor role is filled by Asp-288.

This sequence belongs to the protein kinase superfamily. CMGC Ser/Thr protein kinase family. Lammer subfamily. Interacts with PPIG and UBL5. In terms of processing, autophosphorylates on all three types of residues. As to expression, endothelial cells.

It is found in the nucleus. The catalysed reaction is L-seryl-[protein] + ATP = O-phospho-L-seryl-[protein] + ADP + H(+). It catalyses the reaction L-threonyl-[protein] + ATP = O-phospho-L-threonyl-[protein] + ADP + H(+). The enzyme catalyses L-tyrosyl-[protein] + ATP = O-phospho-L-tyrosyl-[protein] + ADP + H(+). With respect to regulation, regulates splicing of its own pre-mRNA according to its kinase activity; increased expression of the catalytically active form influences splicing to generate the catalytically inactive splicing variant lacking the kinase domain. Leucettine L41 inhibits its kinase activity and affects the regulation of alternative splicing mediated by phosphorylation of SR proteins. Functionally, dual specificity kinase acting on both serine/threonine and tyrosine-containing substrates. Phosphorylates serine- and arginine-rich (SR) proteins of the spliceosomal complex and may be a constituent of a network of regulatory mechanisms that enable SR proteins to control RNA splicing. Phosphorylates: SRSF1, SRSF3 and PTPN1. Regulates the alternative splicing of tissue factor (F3) pre-mRNA in endothelial cells. In Homo sapiens (Human), this protein is Dual specificity protein kinase CLK1.